The sequence spans 1058 residues: Protein argonaute MEL1 (1058 aa).

Gly residues-rich tracts occupy residues 1–12 (MAYRGGGRGGRG) and 24–37 (DVPG…GGGA). Disordered regions lie at residues 1–77 (MAYR…YGAP) and 115–147 (RAPP…PSAT). Pro residues predominate over residues 48 to 70 (WPPPGMTPRPGPPQPQYPRPGPP). Low complexity predominate over residues 121 to 147 (HSSAPAPYQPAAAAPAPSSSSTAPSAT). Positions 407-520 (TVIQFVEEFL…LPMEVCKIVE (114 aa)) constitute a PAZ domain. Positions 696-1016 (LLIVILPEVS…AAFRARYYVE (321 aa)) constitute a Piwi domain.

Belongs to the argonaute family. Ago subfamily.

Its subcellular location is the nucleus. The protein resides in the nucleolus. Essential for the progression of premeiotic mitosis and meiosis during sporogenesis. Regulates the cell division of premeiotic germ cells, the proper modification of meiotic chromosomes, and the faithful progression of meiosis, probably via small RNA-mediated gene silencing. May be involved in histone H3 'Lys-9' demethylation in the pericentromeric region. The chain is Protein argonaute MEL1 (MEL1) from Oryza sativa subsp. japonica (Rice).